Here is a 260-residue protein sequence, read N- to C-terminus: Glutamate racemase (260 aa).

Substrate is bound by residues 14–15 and 46–47; these read DS and YG. Catalysis depends on C77, which acts as the Proton donor/acceptor. 78 to 79 is a binding site for substrate; it reads NT. Residue C188 is the Proton donor/acceptor of the active site. 189–190 is a substrate binding site; the sequence is TH.

This sequence belongs to the aspartate/glutamate racemases family.

It carries out the reaction L-glutamate = D-glutamate. Its pathway is cell wall biogenesis; peptidoglycan biosynthesis. Provides the (R)-glutamate required for cell wall biosynthesis. In Clostridium perfringens (strain 13 / Type A), this protein is Glutamate racemase.